A 465-amino-acid chain; its full sequence is MLDDRARMEATKKEKVEQILAEFQLQEEDLKKVMSRMQKEMDRGLKLETHQEASVKMLPTYVRSTPEGSEVGDFLSLDLGGTNFRVMLVKVGEGEAGQWSVKTKHQMYSIPEDAMTGTAEMLFDYISECISDFLDKHQMKHKKLPLGFTFSFPVRHEDIDKGILLNWTKGFKASGAEGNNIVGLLRDAIKRRGDFEMDVVAMVNDTVATMISCYYEDRQCEVGMIVGTGCNACYMEEMQNVELVEGDEGRMCVNTEWGAFGNSGELDEFLLEYDRMVDESSVNPGQQLYEKIIGGKYMGELVRLVLLKLVEENLLFHGEASEQLRTRGAFETRFVSQVESDSGDRRQILNILSTLGLRPSVADCDIVRRACESVSTRAAHMCSAGLAGVINRMRESRSEDVMRITVGVDGSVYKLHPSFKERFHASVRRLTPNCEITFIESEEGSGRGAALVSAVACKKACMLGQ.

The Hexokinase domain maps to 10–454 (ATKKEKVEQI…SGRGAALVSA (445 aa)). The segment at 67-203 (EGSEVGDFLS…DFEMDVVAMV (137 aa)) is hexokinase small subdomain. Residue 78 to 83 (DLGGTN) participates in ATP binding. Residues 151 to 152 (SF), 168 to 169 (TK), and 204 to 205 (ND) contribute to the substrate site. The tract at residues 204–443 (NDTVATMISC…CEITFIESEE (240 aa)) is hexokinase large subdomain. Thr-228 lines the ATP pocket. Residues Asn-231, Glu-256, and Glu-290 each contribute to the substrate site. ATP contacts are provided by residues 295–296 (GK), 332–336 (TRFVS), and 411–415 (SVYKL).

It belongs to the hexokinase family. In terms of assembly, monomer. Interacts with MIDN; the interaction occurs preferentially at low glucose levels and results in inhibition of hexokinase activity. Interacts with GCKR; leading to sequestration in the nucleus.

Its subcellular location is the cytoplasm. The protein resides in the nucleus. The protein localises to the mitochondrion. It catalyses the reaction a D-hexose + ATP = a D-hexose 6-phosphate + ADP + H(+). It carries out the reaction D-fructose + ATP = D-fructose 6-phosphate + ADP + H(+). The enzyme catalyses D-glucose + ATP = D-glucose 6-phosphate + ADP + H(+). The catalysed reaction is D-mannose + ATP = D-mannose 6-phosphate + ADP + H(+). It participates in carbohydrate metabolism; hexose metabolism. The protein operates within carbohydrate degradation; glycolysis; D-glyceraldehyde 3-phosphate and glycerone phosphate from D-glucose: step 1/4. Subject to allosteric regulation. Low glucose and high fructose-6-phosphate triggers association with the inhibitor GCKR followed by sequestration in the nucleus. Its function is as follows. Catalyzes the phosphorylation of hexose, such as D-glucose, D-fructose and D-mannose, to hexose 6-phosphate (D-glucose 6-phosphate, D-fructose 6-phosphate and D-mannose 6-phosphate, respectively). Compared to other hexokinases, has a weak affinity for D-glucose, and is effective only when glucose is abundant. Mainly expressed in pancreatic beta cells and the liver and constitutes a rate-limiting step in glucose metabolism in these tissues. Since insulin secretion parallels glucose metabolism and the low glucose affinity of GCK ensures that it can change its enzymatic activity within the physiological range of glucose concentrations, GCK acts as a glucose sensor in the pancreatic beta cell. In pancreas, plays an important role in modulating insulin secretion. In liver, helps to facilitate the uptake and conversion of glucose by acting as an insulin-sensitive determinant of hepatic glucose usage. Required to provide D-glucose 6-phosphate for the synthesis of glycogen. Mediates the initial step of glycolysis by catalyzing phosphorylation of D-glucose to D-glucose 6-phosphate. The polypeptide is Hexokinase-4 (Mus musculus (Mouse)).